Reading from the N-terminus, the 96-residue chain is Uteroglobin (96 aa).

Positions Met-1 to Ser-21 are cleaved as a signal peptide.

This sequence belongs to the secretoglobin family. As to quaternary structure, antiparallel homodimer; disulfide-linked. Interaction with LMBR1L is controversial.

It localises to the secreted. In terms of biological role, binds phosphatidylcholine, phosphatidylinositol, polychlorinated biphenyls (PCB) and weakly progesterone, potent inhibitor of phospholipase A2. This is Uteroglobin (SCGB1A1) from Mesocricetus auratus (Golden hamster).